Consider the following 100-residue polypeptide: Large ribosomal subunit protein eL36A (100 aa).

Threonine 2 bears the N-acetylthreonine mark.

This sequence belongs to the eukaryotic ribosomal protein eL36 family. Component of the large ribosomal subunit (LSU). Mature yeast ribosomes consist of a small (40S) and a large (60S) subunit. The 40S small subunit contains 1 molecule of ribosomal RNA (18S rRNA) and 33 different proteins (encoded by 57 genes). The large 60S subunit contains 3 rRNA molecules (25S, 5.8S and 5S rRNA) and 46 different proteins (encoded by 81 genes). In terms of processing, N-terminally acetylated by acetyltransferase NatA.

It is found in the cytoplasm. Its function is as follows. Component of the ribosome, a large ribonucleoprotein complex responsible for the synthesis of proteins in the cell. The small ribosomal subunit (SSU) binds messenger RNAs (mRNAs) and translates the encoded message by selecting cognate aminoacyl-transfer RNA (tRNA) molecules. The large subunit (LSU) contains the ribosomal catalytic site termed the peptidyl transferase center (PTC), which catalyzes the formation of peptide bonds, thereby polymerizing the amino acids delivered by tRNAs into a polypeptide chain. The nascent polypeptides leave the ribosome through a tunnel in the LSU and interact with protein factors that function in enzymatic processing, targeting, and the membrane insertion of nascent chains at the exit of the ribosomal tunnel. The polypeptide is Large ribosomal subunit protein eL36A (Saccharomyces cerevisiae (strain ATCC 204508 / S288c) (Baker's yeast)).